The sequence spans 479 residues: Poly(A) polymerase catalytic subunit (479 aa).

Active-site residues include aspartate 202 and aspartate 204. Ca(2+) is bound by residues aspartate 202, aspartate 204, and aspartate 253.

Belongs to the poxviridae poly(A) polymerase catalytic subunit family. As to quaternary structure, heterodimer of a large (catalytic) subunit and a small (regulatory) subunit.

The enzyme catalyses RNA(n) + ATP = RNA(n)-3'-adenine ribonucleotide + diphosphate. In terms of biological role, polymerase that creates the 3'-poly(A) tail of mRNA's. This Camelus protein is Poly(A) polymerase catalytic subunit (OPG063).